Here is a 449-residue protein sequence, read N- to C-terminus: MDNIGAADAATSSGISGLLSGNSFLGAGIGLMGFGAGLAILRRGLISGASLVKRRMLVSVEIPSKEKSYNAFLHWMSTVPKRYSNQLAVESNRQLKMPQNAREKPDKQVANRIFSLVPGPGKHYIKYKKCWIQVERERSNRLQDLTTGTPWETITLTTLSRDRGIFSELLLEAQKFMQSAQKNKTTIYTAWATEWKPFGHPRSKRMLSSVVLESNVKKMITDDVHDFLRNSQWYDTRGIPYRRGYLLYGPPGSGKTSFLYALAGELDYDICVLNLAEKGLTDDRLNHLLSNVPPKAVVLLEDVDSAFQGRERSGEVGFHANVTFSGLLNALDGVTSSDERIIFMTTNHPEKLDPALVRPGRVDVKAYLGNATPEQVREMFTRFYGHSPEMADDLSDIVCPKNTSMASLQGLFVMNKSSPADAVDMAKELPDNPPSTPFSFNVHRKSLSV.

The Mitochondrial intermembrane segment spans residues 1 to 20 (MDNIGAADAATSSGISGLLS). The chain crosses the membrane as a helical span at residues 21–41 (GNSFLGAGIGLMGFGAGLAIL). Residues 42–449 (RRGLISGASL…FNVHRKSLSV (408 aa)) lie on the Mitochondrial matrix side of the membrane. ATP is bound at residue 249-256 (GPPGSGKT).

This sequence belongs to the AAA ATPase family. BCS1 subfamily.

It is found in the mitochondrion inner membrane. The enzyme catalyses ATP + H2O = ADP + phosphate + H(+). Its function is as follows. Chaperone necessary for the incorporation of Rieske iron-sulfur protein rip1 into the mitochondrial respiratory chain complex III. This is Probable mitochondrial chaperone bcs1 from Schizosaccharomyces pombe (strain 972 / ATCC 24843) (Fission yeast).